The following is a 467-amino-acid chain: Cytochrome c-552 (467 aa).

A signal peptide spans 1-27; it reads MMKKMTGKSFALSALVAASFMAAGAMA. Heme c is bound at residue histidine 87. Positions 115, 118, and 119 each coordinate heme. Residues cysteine 153, cysteine 156, histidine 157, cysteine 195, cysteine 198, and histidine 199 each coordinate heme c. Residues glutamate 201, tyrosine 202, lysine 250, and glutamine 252 each contribute to the Ca(2+) site. Tyrosine 202 serves as a coordination point for substrate. Histidine 253 provides a ligand contact to substrate. Residues histidine 264, cysteine 271, cysteine 274, histidine 275, histidine 290, cysteine 303, cysteine 306, histidine 307, and histidine 382 each contribute to the heme c site.

This sequence belongs to the cytochrome c-552 family. Ca(2+) serves as cofactor. Heme c is required as a cofactor.

Its subcellular location is the periplasm. It catalyses the reaction 6 Fe(III)-[cytochrome c] + NH4(+) + 2 H2O = 6 Fe(II)-[cytochrome c] + nitrite + 8 H(+). Its pathway is nitrogen metabolism; nitrate reduction (assimilation). Functionally, catalyzes the reduction of nitrite to ammonia, consuming six electrons in the process. The chain is Cytochrome c-552 from Shewanella sp. (strain MR-4).